We begin with the raw amino-acid sequence, 362 residues long: Alkanal monooxygenase alpha chain (362 aa).

This sequence belongs to the bacterial luciferase oxidoreductase family. In terms of assembly, heterodimer of an alpha and a beta chain.

It catalyses the reaction a long-chain fatty aldehyde + FMNH2 + O2 = a long-chain fatty acid + hnu + FMN + H2O + 2 H(+). Its function is as follows. Light-emitting reaction in luminous bacteria. This chain is Alkanal monooxygenase alpha chain (luxA), found in Photorhabdus luminescens (Xenorhabdus luminescens).